Here is an 886-residue protein sequence, read N- to C-terminus: Protein translocase subunit SecA (886 aa).

Residues Q85, 103-107 (GEGKT), and D492 contribute to the ATP site. Basic and acidic residues predominate over residues 841 to 864 (RVVENRYAEEGPKQPARRENKVGR). The segment at 841 to 866 (RVVENRYAEEGPKQPARRENKVGRND) is disordered. C868, C870, C879, and C880 together coordinate Zn(2+).

It belongs to the SecA family. As to quaternary structure, monomer and homodimer. Part of the essential Sec protein translocation apparatus which comprises SecA, SecYEG and auxiliary proteins SecDF. Other proteins may also be involved. The cofactor is Zn(2+).

The protein resides in the cell membrane. It localises to the cytoplasm. The catalysed reaction is ATP + H2O + cellular proteinSide 1 = ADP + phosphate + cellular proteinSide 2.. Functionally, part of the Sec protein translocase complex. Interacts with the SecYEG preprotein conducting channel. Has a central role in coupling the hydrolysis of ATP to the transfer of proteins into and across the cell membrane, serving as an ATP-driven molecular motor driving the stepwise translocation of polypeptide chains across the membrane. This is Protein translocase subunit SecA from Pelotomaculum thermopropionicum (strain DSM 13744 / JCM 10971 / SI).